Here is a 243-residue protein sequence, read N- to C-terminus: Adapter protein MecA (243 aa).

Residues 119 to 140 are disordered; it reads NQVEDGQGIAHNPTKDTNDLDP.

The protein belongs to the MecA family. As to quaternary structure, homodimer.

In terms of biological role, enables the recognition and targeting of unfolded and aggregated proteins to the ClpC protease or to other proteins involved in proteolysis. This Lactiplantibacillus plantarum (strain ATCC BAA-793 / NCIMB 8826 / WCFS1) (Lactobacillus plantarum) protein is Adapter protein MecA.